The chain runs to 415 residues: uncharacterized protein (415 aa).

Disordered regions lie at residues 329-351 and 388-415; these read KFNK…TESS and KSMM…IITL. Positions 338-348 are enriched in acidic residues; that stretch reads LQNESGDDSET. Residues 399–409 show a composition bias toward basic residues; it reads KSNRKSNKRSN.

This is an uncharacterized protein from Acanthamoeba polyphaga mimivirus (APMV).